Here is a 249-residue protein sequence, read N- to C-terminus: Segregation and condensation protein A (249 aa).

It belongs to the ScpA family. In terms of assembly, component of a cohesin-like complex composed of ScpA, ScpB and the Smc homodimer, in which ScpA and ScpB bind to the head domain of Smc. The presence of the three proteins is required for the association of the complex with DNA.

The protein localises to the cytoplasm. In terms of biological role, participates in chromosomal partition during cell division. May act via the formation of a condensin-like complex containing Smc and ScpB that pull DNA away from mid-cell into both cell halves. This chain is Segregation and condensation protein A, found in Listeria innocua serovar 6a (strain ATCC BAA-680 / CLIP 11262).